The primary structure comprises 208 residues: Predicted GPI-anchored protein 37 (208 aa).

The N-terminal stretch at 1–18 (MLFTQLIILLTVTSQALS) is a signal peptide. The disordered stretch occupies residues 33 to 93 (TKRLGGGSRG…SSSSSGSRNW (61 aa)). The span at 36-53 (LGGGSRGGSSSGSRGGSS) shows a compositional bias: gly residues. Residues 54–63 (SGSSSGSSSG) show a composition bias toward low complexity. N173 carries N-linked (GlcNAc...) asparagine glycosylation. Residue S185 is the site of GPI-anchor amidated serine attachment. The propeptide at 186 to 208 (SSLNIPSTHFYLIGFAAAYSIVL) is removed in mature form.

The protein belongs to the PGA37 family.

The protein localises to the cell membrane. Functionally, predicted GPI-anchored protein which may have a role during host infection. The polypeptide is Predicted GPI-anchored protein 37 (PGA37) (Candida albicans (strain SC5314 / ATCC MYA-2876) (Yeast)).